A 264-amino-acid polypeptide reads, in one-letter code: Granzyme K (264 aa).

Residues Met1–Asn24 form the signal peptide. A propeptide spans Met25–Glu26 (activation peptide). The region spanning Ile27–Val259 is the Peptidase S1 domain. Cys52 and Cys68 are joined by a disulfide. Residues His67 and Asp116 each act as charge relay system in the active site. 3 cysteine pairs are disulfide-bonded: Cys149–Cys220, Cys181–Cys199, and Cys210–Cys234. The active-site Charge relay system is Ser214.

The protein belongs to the peptidase S1 family. Granzyme subfamily. In terms of tissue distribution, expressed in lung, spleen, thymus and peripheral blood leukocytes.

Its subcellular location is the secreted. The protein resides in the cytoplasmic granule. The protein is Granzyme K (GZMK) of Homo sapiens (Human).